We begin with the raw amino-acid sequence, 302 residues long: Quinolinate synthase (302 aa).

Iminosuccinate-binding residues include histidine 24 and serine 41. Cysteine 86 is a [4Fe-4S] cluster binding site. Iminosuccinate-binding positions include 112–114 (YVN) and serine 129. Cysteine 171 is a [4Fe-4S] cluster binding site. Iminosuccinate contacts are provided by residues 197–199 (HPE) and threonine 214. Cysteine 259 provides a ligand contact to [4Fe-4S] cluster.

The protein belongs to the quinolinate synthase family. Type 2 subfamily. The cofactor is [4Fe-4S] cluster.

It is found in the cytoplasm. The enzyme catalyses iminosuccinate + dihydroxyacetone phosphate = quinolinate + phosphate + 2 H2O + H(+). It functions in the pathway cofactor biosynthesis; NAD(+) biosynthesis; quinolinate from iminoaspartate: step 1/1. Functionally, catalyzes the condensation of iminoaspartate with dihydroxyacetone phosphate to form quinolinate. In Dehalococcoides mccartyi (strain ATCC BAA-2100 / JCM 16839 / KCTC 5957 / BAV1), this protein is Quinolinate synthase.